Consider the following 261-residue polypeptide: Probable electron transfer flavoprotein subunit beta (261 aa).

Residue Ser-2 is modified to N-acetylserine.

The protein belongs to the ETF beta-subunit/FixA family. As to quaternary structure, heterodimer of an alpha and a beta subunit. Interacts with YFH1. FAD is required as a cofactor. AMP serves as cofactor.

The protein resides in the mitochondrion matrix. In terms of biological role, the electron transfer flavoprotein serves as a specific electron acceptor for several dehydrogenases, including five acyl-CoA dehydrogenases, glutaryl-CoA and sarcosine dehydrogenase. It transfers the electrons to the main mitochondrial respiratory chain via ETF-ubiquinone oxidoreductase (ETF dehydrogenase). The chain is Probable electron transfer flavoprotein subunit beta (CIR1) from Saccharomyces cerevisiae (strain ATCC 204508 / S288c) (Baker's yeast).